We begin with the raw amino-acid sequence, 137 residues long: Ribosome-binding factor A (137 aa).

The protein belongs to the RbfA family. In terms of assembly, monomer. Binds 30S ribosomal subunits, but not 50S ribosomal subunits or 70S ribosomes.

It is found in the cytoplasm. In terms of biological role, one of several proteins that assist in the late maturation steps of the functional core of the 30S ribosomal subunit. Associates with free 30S ribosomal subunits (but not with 30S subunits that are part of 70S ribosomes or polysomes). Required for efficient processing of 16S rRNA. May interact with the 5'-terminal helix region of 16S rRNA. The sequence is that of Ribosome-binding factor A from Cereibacter sphaeroides (strain ATCC 17029 / ATH 2.4.9) (Rhodobacter sphaeroides).